The following is a 127-amino-acid chain: uncharacterized protein (127 aa).

The signal sequence occupies residues 1-23 (MSKPLKFLLWSSLALLLLQIGSG).

This is an uncharacterized protein from Arabidopsis thaliana (Mouse-ear cress).